The primary structure comprises 428 residues: MADLDLQRKMVSPKLHVTIPEPCKLSSVSSPISSSSSAACSAYELYLRLPELRNLWSSLYFPHWISEPVLKPALQALEITFRLILTVASDTRPYINRREWIRRLDSLTTSQIKIVAAICGDEDNYEENVSAAPVSNGWSSLSLLSEIATCRTSESVGQKILSTIENEMRWCKYTLGLGEPNLAGKPYLQYDAVCLPEELHSLKNNPYADHIENQENQMLYTSHQILESWIYVSVNLLYRIESRIEEGKFEKASSDVYLLERIWKLLSEIEDLHILMDPEDFLKVKKQLQIKSTFPNDAFCFRSKGLVEMAKMSKELRQKVPAVLEVEVDPTGGPRLQEAAMKLYSRKTEYEKIHLLQGMQAVESAAKRFFFGYQKLVAAMIGNAEANANRTVANHESYDSLTQVFMEPPYYPSLDAAKTFLGEFWSQL.

Interacts with SNF4.

It localises to the cytoplasm. Positive regulator of basal resistance. This chain is Nematode resistance protein-like HSPRO1 (HSPRO1), found in Arabidopsis thaliana (Mouse-ear cress).